An 813-amino-acid chain; its full sequence is Lon protease (813 aa).

Residues 30–225 (LPILPVRNIV…WLLQLMDKDI (196 aa)) form the Lon N-terminal domain. 376-383 (GPPGVGKT) provides a ligand contact to ATP. A Lon proteolytic domain is found at 612–793 (DDLAGIVTGL…DEVLAIALLK (182 aa)). Active-site residues include Ser699 and Lys742.

It belongs to the peptidase S16 family. As to quaternary structure, homohexamer. Organized in a ring with a central cavity.

The protein resides in the cytoplasm. It catalyses the reaction Hydrolysis of proteins in presence of ATP.. Functionally, ATP-dependent serine protease that mediates the selective degradation of mutant and abnormal proteins as well as certain short-lived regulatory proteins. Required for cellular homeostasis and for survival from DNA damage and developmental changes induced by stress. Degrades polypeptides processively to yield small peptide fragments that are 5 to 10 amino acids long. Binds to DNA in a double-stranded, site-specific manner. The polypeptide is Lon protease (Cytophaga hutchinsonii (strain ATCC 33406 / DSM 1761 / CIP 103989 / NBRC 15051 / NCIMB 9469 / D465)).